A 678-amino-acid polypeptide reads, in one-letter code: uncharacterized protein (678 aa).

Disordered stretches follow at residues 123-156 (TPLSEDRKPTSNNEEEDDADEAKSSNADSSTDSV) and 381-417 (TETTETEGVDKEDSDKASSVQGNEDEVPDTASETEHS).

The protein localises to the cytoplasm. This is an uncharacterized protein from Schizosaccharomyces pombe (strain 972 / ATCC 24843) (Fission yeast).